The chain runs to 132 residues: Small ribosomal subunit protein uS8 (132 aa).

The protein belongs to the universal ribosomal protein uS8 family. As to quaternary structure, part of the 30S ribosomal subunit. Contacts proteins S5 and S12.

Its function is as follows. One of the primary rRNA binding proteins, it binds directly to 16S rRNA central domain where it helps coordinate assembly of the platform of the 30S subunit. The protein is Small ribosomal subunit protein uS8 of Mycobacterium marinum (strain ATCC BAA-535 / M).